The chain runs to 122 residues: Large ribosomal subunit protein bL12 (122 aa).

This sequence belongs to the bacterial ribosomal protein bL12 family. Homodimer. Part of the ribosomal stalk of the 50S ribosomal subunit. Forms a multimeric L10(L12)X complex, where L10 forms an elongated spine to which 2 to 4 L12 dimers bind in a sequential fashion. Binds GTP-bound translation factors.

In terms of biological role, forms part of the ribosomal stalk which helps the ribosome interact with GTP-bound translation factors. Is thus essential for accurate translation. The polypeptide is Large ribosomal subunit protein bL12 (Streptococcus mutans serotype c (strain ATCC 700610 / UA159)).